The chain runs to 144 residues: Large ribosomal subunit protein uL15 (144 aa).

The segment at 1–52 (MKLHTLKSTPGARVEKHRVGRGHAAGKGKQAGKGQSGQNKRHGHRLGFEGGQ) is disordered. Over residues 15–26 (EKHRVGRGHAAG) the composition is skewed to basic residues.

Belongs to the universal ribosomal protein uL15 family. As to quaternary structure, part of the 50S ribosomal subunit.

In terms of biological role, binds to the 23S rRNA. This Mycoplasmopsis agalactiae (strain NCTC 10123 / CIP 59.7 / PG2) (Mycoplasma agalactiae) protein is Large ribosomal subunit protein uL15.